Here is a 323-residue protein sequence, read N- to C-terminus: Transmembrane protein 59 (323 aa).

The N-terminal stretch at 1–35 is a signal peptide; sequence MAAPKGSLWVRTQLGLPPLLLLTMALAGGSGTASA. Residues 36 to 238 are Extracellular-facing; it reads EAFDSVLGDT…GFLRCLSLNS (203 aa). N90 carries an N-linked (GlcNAc...) asparagine glycan. The helical transmembrane segment at 239–259 threads the bilayer; sequence GWILTTTLVLSVMVLLWICCA. Residues 260-323 lie on the Cytoplasmic side of the membrane; sequence TVATAVEQYV…TKVNLAHSEI (64 aa). The short motif at 263–281 is the ATG16L1-binding motif element; that stretch reads TAVEQYVPSEKLSIYGDLE. T303 is subject to Phosphothreonine.

Belongs to the TMEM59 family. Interacts with ATG16L1 (via WD repeats). N-glycosylated.

It is found in the late endosome membrane. It localises to the lysosome membrane. The protein resides in the cell membrane. Its subcellular location is the golgi apparatus membrane. Acts as a regulator of autophagy in response to S.aureus infection by promoting activation of LC3 (MAP1LC3A, MAP1LC3B or MAP1LC3C). Acts by interacting with ATG16L1, leading to promote a functional complex between LC3 and ATG16L1 and promoting LC3 lipidation and subsequent activation of autophagy. Modulates the O-glycosylation and complex N-glycosylation steps occurring during the Golgi maturation of several proteins such as APP, BACE1, SEAP or PRNP. Inhibits APP transport to the cell surface and further shedding. The chain is Transmembrane protein 59 (TMEM59) from Homo sapiens (Human).